Consider the following 429-residue polypeptide: Citrate synthase, chromosomal (429 aa).

Catalysis depends on residues His-306 and Asp-364.

The protein belongs to the citrate synthase family.

It catalyses the reaction oxaloacetate + acetyl-CoA + H2O = citrate + CoA + H(+). The protein operates within carbohydrate metabolism; tricarboxylic acid cycle; isocitrate from oxaloacetate: step 1/2. This chain is Citrate synthase, chromosomal (ccsA), found in Rhizobium tropici.